Reading from the N-terminus, the 99-residue chain is DNA-directed RNA polymerase subunit omega (99 aa).

Residues 1 to 10 (MSSTSAASAA) show a composition bias toward low complexity. Positions 1–20 (MSSTSAASAAGQGALPAYDT) are disordered.

Belongs to the RNA polymerase subunit omega family. In terms of assembly, the RNAP catalytic core consists of 2 alpha, 1 beta, 1 beta' and 1 omega subunit. When a sigma factor is associated with the core the holoenzyme is formed, which can initiate transcription.

It catalyses the reaction RNA(n) + a ribonucleoside 5'-triphosphate = RNA(n+1) + diphosphate. In terms of biological role, promotes RNA polymerase assembly. Latches the N- and C-terminal regions of the beta' subunit thereby facilitating its interaction with the beta and alpha subunits. The sequence is that of DNA-directed RNA polymerase subunit omega from Rhodococcus erythropolis (strain PR4 / NBRC 100887).